A 620-amino-acid chain; its full sequence is Arginine--tRNA ligase (620 aa).

The 'HIGH' region signature appears at 147 to 157 (ANPTGPIHIGG).

It belongs to the class-I aminoacyl-tRNA synthetase family. In terms of assembly, monomer.

It localises to the cytoplasm. The catalysed reaction is tRNA(Arg) + L-arginine + ATP = L-arginyl-tRNA(Arg) + AMP + diphosphate. The polypeptide is Arginine--tRNA ligase (Bifidobacterium longum (strain NCC 2705)).